The sequence spans 679 residues: Methionine--tRNA ligase (679 aa).

A 'HIGH' region motif is present at residues 12–22 (PYANGPIHIGH). C143, C146, C156, and C158 together coordinate Zn(2+). The 'KMSKS' region signature appears at 328 to 332 (KMSKS). K331 is an ATP binding site. Residues 537–564 (MMEESKDEAAQETGAAATNPFNDSDQPL) form a disordered region. Residues 577 to 679 (DFMKVDLRVA…EGALPGQRVH (103 aa)) enclose the tRNA-binding domain.

Belongs to the class-I aminoacyl-tRNA synthetase family. MetG type 1 subfamily. As to quaternary structure, homodimer. Zn(2+) is required as a cofactor.

Its subcellular location is the cytoplasm. The catalysed reaction is tRNA(Met) + L-methionine + ATP = L-methionyl-tRNA(Met) + AMP + diphosphate. Functionally, is required not only for elongation of protein synthesis but also for the initiation of all mRNA translation through initiator tRNA(fMet) aminoacylation. The chain is Methionine--tRNA ligase from Rhodopirellula baltica (strain DSM 10527 / NCIMB 13988 / SH1).